We begin with the raw amino-acid sequence, 831 residues long: Periplasmic nitrate reductase (831 aa).

The tat-type signal signal peptide spans 1 to 29 (MKISRRDFIKQTAITATASVAGVTLPAGA). A 4Fe-4S Mo/W bis-MGD-type domain is found at 41 to 97 (LKWSKAPCRFCGTGCGVTVAVKDNKVVATQGDPQAEVNKGLNCVKGYFLSKIMYGQD). [4Fe-4S] cluster is bound by residues Cys48, Cys51, Cys55, and Cys83. Mo-bis(molybdopterin guanine dinucleotide) contacts are provided by residues Lys85, Gln152, Asn177, Cys181, 214–221 (WGSNMAEM), 245–249 (STFTH), 264–266 (QTD), Met375, Gln379, Asn485, 511–512 (SD), Lys534, Asp561, and 721–730 (TGRVLEHWHS). Trp797 lines the substrate pocket. Mo-bis(molybdopterin guanine dinucleotide) contacts are provided by Asn805 and Lys822.

This sequence belongs to the prokaryotic molybdopterin-containing oxidoreductase family. NasA/NapA/NarB subfamily. As to quaternary structure, component of the periplasmic nitrate reductase NapAB complex composed of NapA and NapB. Requires [4Fe-4S] cluster as cofactor. It depends on Mo-bis(molybdopterin guanine dinucleotide) as a cofactor. In terms of processing, predicted to be exported by the Tat system. The position of the signal peptide cleavage has been experimentally proven.

The protein resides in the periplasm. The catalysed reaction is 2 Fe(II)-[cytochrome] + nitrate + 2 H(+) = 2 Fe(III)-[cytochrome] + nitrite + H2O. Functionally, catalytic subunit of the periplasmic nitrate reductase complex NapAB. Receives electrons from NapB and catalyzes the reduction of nitrate to nitrite. The polypeptide is Periplasmic nitrate reductase (Cupriavidus necator (strain ATCC 17699 / DSM 428 / KCTC 22496 / NCIMB 10442 / H16 / Stanier 337) (Ralstonia eutropha)).